Here is a 428-residue protein sequence, read N- to C-terminus: Histidinol dehydrogenase (428 aa).

Serine 234, glutamine 256, and histidine 259 together coordinate substrate. Residues glutamine 256 and histidine 259 each coordinate Zn(2+). Active-site proton acceptor residues include glutamate 323 and histidine 324. Positions 324, 357, 411, and 416 each coordinate substrate. A Zn(2+)-binding site is contributed by aspartate 357. Residue histidine 416 participates in Zn(2+) binding.

Belongs to the histidinol dehydrogenase family. Zn(2+) serves as cofactor.

It catalyses the reaction L-histidinol + 2 NAD(+) + H2O = L-histidine + 2 NADH + 3 H(+). It participates in amino-acid biosynthesis; L-histidine biosynthesis; L-histidine from 5-phospho-alpha-D-ribose 1-diphosphate: step 9/9. Its function is as follows. Catalyzes the sequential NAD-dependent oxidations of L-histidinol to L-histidinaldehyde and then to L-histidine. The polypeptide is Histidinol dehydrogenase (Campylobacter jejuni (strain RM1221)).